Here is a 257-residue protein sequence, read N- to C-terminus: Zinc transporter ZupT (257 aa).

3 consecutive transmembrane segments (helical) span residues 5 to 25 (LILTILAGAATFIGAFLGVLG), 32 to 52 (LLAFSLGFAAGIMLLISLMEM), and 61 to 81 (GMSPVLGYGMFIFGLLGYFGL). Positions 120 and 123 each coordinate Fe(2+). Zn(2+) is bound by residues Glu-123 and His-148. 4 helical membrane-spanning segments follow: residues 137–157 (LGFGIALAVALHNIPEGLAVA), 171–191 (ILWAGISGLAEILGGVLAWLI), 195–215 (MISPVVMAAIMAAVAGIMVAL), and 236–256 (GVLCGMSVMGFSLVLLQTVGI). 3 residues coordinate Fe(2+): Asn-149, Glu-152, and Glu-181. Position 152 (Glu-152) interacts with Zn(2+).

It belongs to the ZIP transporter (TC 2.A.5) family. ZupT subfamily.

The protein localises to the cell inner membrane. The enzyme catalyses Zn(2+)(in) = Zn(2+)(out). Mediates zinc uptake. May also transport other divalent cations. This is Zinc transporter ZupT from Escherichia coli O81 (strain ED1a).